The following is a 273-amino-acid chain: MKIISNPLELKEYLKDEKRSIGFIPTMGALHEGHIALIKKAKEQNELVVVSIFLNPTQFLKGEDLDKYPKKDEADRQICKLCGVDILFFPHVDGIYGSDEVSLLAPKIRGFVLEGQSRPSHFNGVLTVVMKLLNIVRPKRAYFGKKDAQQLNLISLMVKQLFMSVEIVAVDTVREKDGLALSSRNAYLTPAQRQEALKIATSLRSATAMVMRGIFDSELIIANMREILSPLDISYVAIVNREFTELKRVEIGNSVILVEASLGSTRLLDNIWL.

Residue 27–34 (MGALHEGH) coordinates ATP. The active-site Proton donor is H34. Q58 is a binding site for (R)-pantoate. Q58 lines the beta-alanine pocket. 144 to 147 (GKKD) serves as a coordination point for ATP. Q150 provides a ligand contact to (R)-pantoate. ATP-binding positions include V173 and 181–184 (LSSR).

Belongs to the pantothenate synthetase family. In terms of assembly, homodimer.

Its subcellular location is the cytoplasm. It catalyses the reaction (R)-pantoate + beta-alanine + ATP = (R)-pantothenate + AMP + diphosphate + H(+). It participates in cofactor biosynthesis; (R)-pantothenate biosynthesis; (R)-pantothenate from (R)-pantoate and beta-alanine: step 1/1. In terms of biological role, catalyzes the condensation of pantoate with beta-alanine in an ATP-dependent reaction via a pantoyl-adenylate intermediate. The chain is Pantothenate synthetase from Sulfurimonas denitrificans (strain ATCC 33889 / DSM 1251) (Thiomicrospira denitrificans (strain ATCC 33889 / DSM 1251)).